Reading from the N-terminus, the 346-residue chain is S-adenosylmethionine:tRNA ribosyltransferase-isomerase (346 aa).

This sequence belongs to the QueA family. In terms of assembly, monomer.

The protein localises to the cytoplasm. The catalysed reaction is 7-aminomethyl-7-carbaguanosine(34) in tRNA + S-adenosyl-L-methionine = epoxyqueuosine(34) in tRNA + adenine + L-methionine + 2 H(+). It functions in the pathway tRNA modification; tRNA-queuosine biosynthesis. Transfers and isomerizes the ribose moiety from AdoMet to the 7-aminomethyl group of 7-deazaguanine (preQ1-tRNA) to give epoxyqueuosine (oQ-tRNA). The protein is S-adenosylmethionine:tRNA ribosyltransferase-isomerase of Neisseria meningitidis serogroup C (strain 053442).